Consider the following 130-residue polypeptide: Small ribosomal subunit protein uS8 (130 aa).

This sequence belongs to the universal ribosomal protein uS8 family. As to quaternary structure, part of the 30S ribosomal subunit. Contacts proteins S5 and S12.

In terms of biological role, one of the primary rRNA binding proteins, it binds directly to 16S rRNA central domain where it helps coordinate assembly of the platform of the 30S subunit. The chain is Small ribosomal subunit protein uS8 from Pseudomonas putida (strain ATCC 700007 / DSM 6899 / JCM 31910 / BCRC 17059 / LMG 24140 / F1).